The sequence spans 230 residues: Cytidylate kinase (230 aa).

12–20 serves as a coordination point for ATP; that stretch reads GPSGAGKGT.

It belongs to the cytidylate kinase family. Type 1 subfamily.

The protein resides in the cytoplasm. It carries out the reaction CMP + ATP = CDP + ADP. The catalysed reaction is dCMP + ATP = dCDP + ADP. The chain is Cytidylate kinase from Shewanella pealeana (strain ATCC 700345 / ANG-SQ1).